The chain runs to 236 residues: Orotidine 5'-phosphate decarboxylase (236 aa).

Substrate-binding positions include aspartate 17, lysine 39, 66-75 (DLKFHDIPNT), threonine 125, arginine 186, glutamine 195, glycine 215, and arginine 216. Lysine 68 functions as the Proton donor in the catalytic mechanism.

This sequence belongs to the OMP decarboxylase family. Type 1 subfamily. In terms of assembly, homodimer.

The catalysed reaction is orotidine 5'-phosphate + H(+) = UMP + CO2. The protein operates within pyrimidine metabolism; UMP biosynthesis via de novo pathway; UMP from orotate: step 2/2. In terms of biological role, catalyzes the decarboxylation of orotidine 5'-monophosphate (OMP) to uridine 5'-monophosphate (UMP). The chain is Orotidine 5'-phosphate decarboxylase from Buchnera aphidicola subsp. Acyrthosiphon pisum (strain 5A).